Reading from the N-terminus, the 233-residue chain is MAKQTKKQKALVTKLGDNQKLYAVDEAIALLKDLKSAKFDESLEVSLNLGVDPRHADQMVRGMVTLPSGTGKDVKVAVFARGDKAEAALAAGADKVGAEDLLEDMQAGNLDYGRVIATPDMMGIVGRLGKVLGPKGLMPNPKLGTVTPNVAEAVKAAKGGQIEFRVEKAGIIHGGIGKLSFSDEALRANFDAFVDAIVKAKPAGAKGKYLRKVGLSSSMGPGLKIDLAQVNGG.

This sequence belongs to the universal ribosomal protein uL1 family. In terms of assembly, part of the 50S ribosomal subunit.

Binds directly to 23S rRNA. The L1 stalk is quite mobile in the ribosome, and is involved in E site tRNA release. Its function is as follows. Protein L1 is also a translational repressor protein, it controls the translation of the L11 operon by binding to its mRNA. This chain is Large ribosomal subunit protein uL1, found in Novosphingobium aromaticivorans (strain ATCC 700278 / DSM 12444 / CCUG 56034 / CIP 105152 / NBRC 16084 / F199).